Reading from the N-terminus, the 646-residue chain is Kinesin-like protein klp-20 (646 aa).

In terms of domain architecture, Kinesin motor spans 6 to 331; that stretch reads KVKVVVRCRP…LRYANRAKNI (326 aa). 91–98 contributes to the ATP binding site; the sequence is GQTGTGKT. Positions 342–552 form a coiled coil; that stretch reads KDAQLRKFQL…LRKELLLNIA (211 aa). The interval 525 to 550 is interaction with klp-11; the sequence is LEEDHQRQVEAMLDDIRQLRKELLLN. The interval 623-646 is disordered; the sequence is TAEHRPRTSSKKHRASIRLQQLLT. The span at 629–638 shows a compositional bias: basic residues; sequence RTSSKKHRAS.

It belongs to the TRAFAC class myosin-kinesin ATPase superfamily. Kinesin family. Kinesin II subfamily. In terms of assembly, component of the kinesin II motor complex, a heterotrimeric complex composed of kap-1, klp-11 and klp-20. Interacts (via C-terminus) with klp-11 (via C-terminus) to form a heterodimer. Furthermore, within the heterodimer, the C-termini of klp-20 and klp-11 interact to form a coiled coil (stalk) or tail domain, and this is necessary for association with kap-1, and kinesin II motor complex activity upon IFT cargo binding. Prior to cargo binding, the klp-11/klp-20 heterodimer is autoinhibited by the tail domain of the heterodimer, which folds onto the kinesin motor domain. Cargo binding to the heterodimer relieves the autoinhibition, and allows for an extended conformation of the tail domain, and function of the heterodimer.

It localises to the cell projection. The protein resides in the cilium. It is found in the cytoplasm. Its subcellular location is the cytoskeleton. Its function is as follows. Component of the kinesin II motor complex (composed of kap-1 and the heterodimeric motor proteins klp-11 and klp-20) which is required for intraflagellar transport (IFT). Heterodimerizes with klp-11 to form a 'processive' molecular motor upon IFT cargo binding, which, within the kinesin II motor complex, binds to and moves along microtubules in a unidirectional manner (without dissociation of the heterodimer), and in turn, is responsible for the IFT of cargo. Specifically, the kinesin II motor complex, together with the kinesin motor protein osm-3 moves along microtubules and is required for anterograde IFT along the middle segment of the sensory neuron cilia. In particular, the kinesin II motor complex delivers specific ciliary cargo proteins such as che-3 which are related to motility to ciliary tips. This is likely mediated by IFT complexes A and B. The protein is Kinesin-like protein klp-20 of Caenorhabditis elegans.